The chain runs to 452 residues: RNA polymerase II-associated protein rba50 (452 aa).

3 disordered regions span residues 60–83, 125–202, and 223–261; these read LRKN…IDEE, EREL…QTKR, and PIKG…PLEF. Residues 125-135 are compositionally biased toward basic and acidic residues; that stretch reads ERELAQRKDRS. Residues 136–154 show a composition bias toward polar residues; it reads SQVNTPDLSQRPSDDSFLS. Over residues 156-165 the composition is skewed to basic and acidic residues; it reads EKLRSSEKLN. Over residues 170-191 the composition is skewed to low complexity; it reads SVLSSEAVDSSSGSPSPPMALS.

It belongs to the RPAP1 family. In terms of assembly, interacts with RNA polymerase II.

The protein resides in the cytoplasm. The protein localises to the nucleus. Functionally, forms an interface between the RNA polymerase II enzyme and chaperone/scaffolding proteins, suggesting that it is required to connect RNA polymerase II to regulators of protein complex formation. This chain is RNA polymerase II-associated protein rba50 (rba50), found in Schizosaccharomyces pombe (strain 972 / ATCC 24843) (Fission yeast).